A 142-amino-acid chain; its full sequence is Small ribosomal subunit protein uS9 (142 aa).

The protein belongs to the universal ribosomal protein uS9 family.

The chain is Small ribosomal subunit protein uS9 (RPS16) from Debaryomyces hansenii (strain ATCC 36239 / CBS 767 / BCRC 21394 / JCM 1990 / NBRC 0083 / IGC 2968) (Yeast).